The chain runs to 435 residues: Adenylosuccinate synthetase (435 aa).

GTP-binding positions include 19–25 (GDEGKGK) and 49–51 (GHT). Aspartate 20 serves as the catalytic Proton acceptor. Mg(2+)-binding residues include aspartate 20 and glycine 49. IMP is bound by residues 20–23 (DEGK), 47–50 (NAGH), threonine 139, arginine 153, asparagine 233, threonine 248, and arginine 312. Catalysis depends on histidine 50, which acts as the Proton donor. 308–314 (VTTGRKR) provides a ligand contact to substrate. GTP-binding positions include arginine 314, 340-342 (KLD), and 422-424 (GVG).

This sequence belongs to the adenylosuccinate synthetase family. As to quaternary structure, homodimer. The cofactor is Mg(2+).

The protein localises to the cytoplasm. It carries out the reaction IMP + L-aspartate + GTP = N(6)-(1,2-dicarboxyethyl)-AMP + GDP + phosphate + 2 H(+). It functions in the pathway purine metabolism; AMP biosynthesis via de novo pathway; AMP from IMP: step 1/2. Functionally, plays an important role in the de novo pathway and in the salvage pathway of purine nucleotide biosynthesis. Catalyzes the first committed step in the biosynthesis of AMP from IMP. In Brugia malayi (Filarial nematode worm), this protein is Adenylosuccinate synthetase.